The following is a 218-amino-acid chain: Octanoyltransferase (218 aa).

The 176-residue stretch at 31-206 folds into the BPL/LPL catalytic domain; that stretch reads REAADEVWLV…QLVKHLDYAE (176 aa). Residues 70–77, 137–139, and 150–152 contribute to the substrate site; these read RGGQVTYH, SLG, and GLA. The active-site Acyl-thioester intermediate is Cys168.

It belongs to the LipB family.

Its subcellular location is the cytoplasm. It catalyses the reaction octanoyl-[ACP] + L-lysyl-[protein] = N(6)-octanoyl-L-lysyl-[protein] + holo-[ACP] + H(+). It participates in protein modification; protein lipoylation via endogenous pathway; protein N(6)-(lipoyl)lysine from octanoyl-[acyl-carrier-protein]: step 1/2. Functionally, catalyzes the transfer of endogenously produced octanoic acid from octanoyl-acyl-carrier-protein onto the lipoyl domains of lipoate-dependent enzymes. Lipoyl-ACP can also act as a substrate although octanoyl-ACP is likely to be the physiological substrate. This chain is Octanoyltransferase, found in Pseudomonas savastanoi pv. phaseolicola (strain 1448A / Race 6) (Pseudomonas syringae pv. phaseolicola (strain 1448A / Race 6)).